Here is a 296-residue protein sequence, read N- to C-terminus: Glycine N-acyltransferase (296 aa).

An N6-acetyllysine; alternate modification is found at K16. Residue K16 is modified to N6-succinyllysine; alternate. Residue K113 is modified to N6-acetyllysine. N6-acetyllysine; alternate is present on residues K127 and K142. 2 positions are modified to N6-succinyllysine; alternate: K127 and K142. K159 carries the post-translational modification N6-acetyllysine. K169 carries the post-translational modification N6-succinyllysine. K183 and K256 each carry N6-acetyllysine; alternate. Residues K183 and K256 each carry the N6-succinyllysine; alternate modification. K267 carries the N6-succinyllysine modification.

Belongs to the glycine N-acyltransferase family.

It is found in the mitochondrion. It catalyses the reaction an acyl-CoA + glycine = an N-acylglycine + CoA + H(+). The enzyme catalyses benzoyl-CoA + glycine = N-benzoylglycine + CoA + H(+). Functionally, mitochondrial acyltransferase which transfers an acyl group to the N-terminus of glycine and glutamine, although much less efficiently. Can conjugate a multitude of substrates to form a variety of N-acylglycines, thereby detoxify xenobiotics, such as benzoic acid or salicylic acid, and endogenous organic acids, such as isovaleric acid. The polypeptide is Glycine N-acyltransferase (Glyat) (Rattus norvegicus (Rat)).